The chain runs to 637 residues: 5-hmdU DNA kinase (637 aa).

The tract at residues A249 to L269 is disordered.

This sequence belongs to the thymidylate kinase family. 5-hmdU DNA kinase subfamily.

The catalysed reaction is 5-hydroxymethyl-dUMP in DNA + ATP = 5-phosphomethyl-dUMP in DNA + ADP + H(+). Phosphorylates 5-hydroxymethyluracil (5hmdU) into 5-phosphomethyl-2'-deoxyuridine (5- PmdU) on DNA as a step in the pathway leading to thymidine hypermodifications in the viral genome. The phosphate is added internally to the DNA polymer. As a final result of the pathway of hypermodification, alpha-glutamylthymidine (YdTMP) substitutes for about 20% of the thymidines in the viral DNA, the 80% left are dTMP. These modifications probably prevent degradation of viral genome by the host restriction-modification antiviral defense system. The chain is 5-hmdU DNA kinase from Bacillus phage SP10 (Bacillus phage SP-10).